The following is a 630-amino-acid chain: Protein mono-ADP-ribosyltransferase PARP6 (630 aa).

The residue at position 237 (Cys-237) is an ADP-ribosylcysteine. A PARP catalytic domain is found at 394–620; that stretch reads EMTQGSYLEI…QDPKIQKEIM (227 aa). Position 600 is an ADP-ribosyl aspartic acid (Asp-600).

This sequence belongs to the ARTD/PARP family. Auto-mono-ADP-ribosylated.

It catalyses the reaction L-aspartyl-[protein] + NAD(+) = 4-O-(ADP-D-ribosyl)-L-aspartyl-[protein] + nicotinamide. The catalysed reaction is L-cysteinyl-[protein] + NAD(+) = S-(ADP-D-ribosyl)-L-cysteinyl-[protein] + nicotinamide + H(+). Its function is as follows. Mono-ADP-ribosyltransferase that mediates mono-ADP-ribosylation of target proteins. The chain is Protein mono-ADP-ribosyltransferase PARP6 from Mus musculus (Mouse).